The primary structure comprises 181 residues: Cell division protein ZapC (181 aa).

Belongs to the ZapC family. As to quaternary structure, interacts directly with FtsZ.

It is found in the cytoplasm. Functionally, contributes to the efficiency of the cell division process by stabilizing the polymeric form of the cell division protein FtsZ. Acts by promoting interactions between FtsZ protofilaments and suppressing the GTPase activity of FtsZ. The protein is Cell division protein ZapC of Shewanella woodyi (strain ATCC 51908 / MS32).